The sequence spans 1449 residues: Disease resistance protein RPP5 (1449 aa).

Positions Arg10–Leu178 constitute a TIR domain. The active site involves Glu85. The NB-ARC domain maps to Glu192–Val446. 19 LRR repeats span residues Met549–Pro573, Leu574–Ala595, Tyr597–Leu618, Gly619–Arg642, Leu644–Ala665, Met687–Pro710, Lys712–Val732, Glu733–Leu755, Gly756–Ile779, Ala802–Leu825, Glu826–Cys849, Leu915–Thr939, Leu941–Leu962, Gln963–Leu985, Ser986–Trp1011, Ala1028–Leu1052, Gln1053–Ser1077, Ser1096–Phe1119, and Thr1120–Leu1143.

Interacts with RSH1.

It catalyses the reaction NAD(+) + H2O = ADP-D-ribose + nicotinamide + H(+). Its function is as follows. TIR-NB-LRR receptor-like protein that confers resistance to the pathogen Hyaloperonospora arabidopsis isolate Noco2 (downy mildew disease). Confers resistance to H.arabidopsis isolates Emoy2, Emwa1 and Noco2. The sequence is that of Disease resistance protein RPP5 from Arabidopsis thaliana (Mouse-ear cress).